We begin with the raw amino-acid sequence, 109 residues long: C-X-C motif chemokine 13 (109 aa).

Residues 1–21 (MRLSTATLLLLLASCLSPGHG) form the signal peptide. Cystine bridges form between C32–C59 and C34–C75.

This sequence belongs to the intercrine alpha (chemokine CxC) family. Found in spleen (B-cell-rich zone or follicles), Peyer patches (strongest within germinal centers and extending to the mantle zone) and lymph nodes (in reticular pattern in follicles).

Its subcellular location is the secreted. Functionally, strongly chemotactic for B-lymphocytes, weakly for spleen monocytes and macrophages but no chemotactic activity for granulocytes. Binds to BLR1/CXCR5. May play a role in directing the migration of B-lymphocytes to follicles in secondary lymphoid organs. The chain is C-X-C motif chemokine 13 (Cxcl13) from Mus musculus (Mouse).